The primary structure comprises 315 residues: Small ribosomal subunit protein mS45 (315 aa).

A mitochondrion-targeting transit peptide spans 1 to 66; it reads MRNSVEFSQL…SKYVACNSRS (66 aa).

This sequence belongs to the mitochondrion-specific ribosomal protein mS45 family. As to quaternary structure, component of the mitochondrial small ribosomal subunit (mt-SSU). Mature yeast 74S mitochondrial ribosomes consist of a small (37S) and a large (54S) subunit. The 37S small subunit contains a 15S ribosomal RNA (15S mt-rRNA) and at least 32 different proteins. The 54S large subunit contains a 21S rRNA (21S mt-rRNA) and at least 45 different proteins.

The protein resides in the mitochondrion. Its function is as follows. Component of the mitochondrial ribosome (mitoribosome), a dedicated translation machinery responsible for the synthesis of mitochondrial genome-encoded proteins, including at least some of the essential transmembrane subunits of the mitochondrial respiratory chain. The mitoribosomes are attached to the mitochondrial inner membrane and translation products are cotranslationally integrated into the membrane. Required for mitochondrial protein synthesis. Has a role in mitochondrial integrity and cell respiration. The protein is Small ribosomal subunit protein mS45 (bot1) of Schizosaccharomyces pombe (strain 972 / ATCC 24843) (Fission yeast).